A 318-amino-acid chain; its full sequence is CRISPR-associated endonuclease Cas1 1 (318 aa).

Mn(2+) is bound by residues E157, H222, and E237.

It belongs to the CRISPR-associated endonuclease Cas1 family. In terms of assembly, homodimer, forms a heterotetramer with a Cas2 homodimer. Requires Mg(2+) as cofactor. Mn(2+) is required as a cofactor.

In terms of biological role, CRISPR (clustered regularly interspaced short palindromic repeat), is an adaptive immune system that provides protection against mobile genetic elements (viruses, transposable elements and conjugative plasmids). CRISPR clusters contain spacers, sequences complementary to antecedent mobile elements, and target invading nucleic acids. CRISPR clusters are transcribed and processed into CRISPR RNA (crRNA). Acts as a dsDNA endonuclease. Involved in the integration of spacer DNA into the CRISPR cassette. This chain is CRISPR-associated endonuclease Cas1 1, found in Francisella tularensis subsp. novicida (strain U112).